We begin with the raw amino-acid sequence, 66 residues long: Large ribosomal subunit protein bL31 (66 aa).

Cys-16, Cys-18, Cys-36, and Cys-39 together coordinate Zn(2+).

This sequence belongs to the bacterial ribosomal protein bL31 family. Type A subfamily. In terms of assembly, part of the 50S ribosomal subunit. Zn(2+) serves as cofactor.

Binds the 23S rRNA. The sequence is that of Large ribosomal subunit protein bL31 from Campylobacter jejuni subsp. jejuni serotype O:6 (strain 81116 / NCTC 11828).